The following is a 179-amino-acid chain: GTP-dependent dephospho-CoA kinase (179 aa).

GTP is bound by residues D55, V57, D74, K76, and E128.

It belongs to the GTP-dependent DPCK family.

The catalysed reaction is 3'-dephospho-CoA + GTP = GDP + CoA + H(+). It functions in the pathway cofactor biosynthesis; coenzyme A biosynthesis. Its function is as follows. Catalyzes the GTP-dependent phosphorylation of the 3'-hydroxyl group of dephosphocoenzyme A to form coenzyme A (CoA). This Saccharolobus solfataricus (strain ATCC 35092 / DSM 1617 / JCM 11322 / P2) (Sulfolobus solfataricus) protein is GTP-dependent dephospho-CoA kinase.